A 224-amino-acid chain; its full sequence is Small ribosomal subunit protein uS3 (224 aa).

The KH type-2 domain maps to 39–107 (IREFLKKKPS…DVWVEIAEVK (69 aa)).

This sequence belongs to the universal ribosomal protein uS3 family. In terms of assembly, part of the 30S ribosomal subunit. Forms a tight complex with proteins S10 and S14.

Functionally, binds the lower part of the 30S subunit head. Binds mRNA in the 70S ribosome, positioning it for translation. In Chlamydia muridarum (strain MoPn / Nigg), this protein is Small ribosomal subunit protein uS3.